Reading from the N-terminus, the 384-residue chain is PqqA peptide cyclase (384 aa).

One can recognise a Radical SAM core domain in the interval 5 to 220 (VGLPLWLLAE…TNEYREKLKA (216 aa)). [4Fe-4S] cluster contacts are provided by Cys-19, Cys-23, and Cys-26.

Belongs to the radical SAM superfamily. PqqE family. As to quaternary structure, interacts with PqqD. The interaction is necessary for activity of PqqE. [4Fe-4S] cluster is required as a cofactor.

It catalyses the reaction [PQQ precursor protein] + S-adenosyl-L-methionine = E-Y cross-linked-[PQQ precursor protein] + 5'-deoxyadenosine + L-methionine + H(+). It participates in cofactor biosynthesis; pyrroloquinoline quinone biosynthesis. Catalyzes the cross-linking of a glutamate residue and a tyrosine residue in the PqqA protein as part of the biosynthesis of pyrroloquinoline quinone (PQQ). The chain is PqqA peptide cyclase from Acinetobacter baumannii (strain ACICU).